Here is a 177-residue protein sequence, read N- to C-terminus: Large ribosomal subunit protein uL6 (177 aa).

The protein belongs to the universal ribosomal protein uL6 family. As to quaternary structure, part of the 50S ribosomal subunit.

In terms of biological role, this protein binds to the 23S rRNA, and is important in its secondary structure. It is located near the subunit interface in the base of the L7/L12 stalk, and near the tRNA binding site of the peptidyltransferase center. This chain is Large ribosomal subunit protein uL6, found in Neisseria gonorrhoeae (strain ATCC 700825 / FA 1090).